Consider the following 355-residue polypeptide: Alanine racemase (355 aa).

The Proton acceptor; specific for D-alanine role is filled by Lys-37. An N6-(pyridoxal phosphate)lysine modification is found at Lys-37. Arg-129 is a substrate binding site. The active-site Proton acceptor; specific for L-alanine is Tyr-251. A substrate-binding site is contributed by Met-299.

The protein belongs to the alanine racemase family. Pyridoxal 5'-phosphate is required as a cofactor.

It carries out the reaction L-alanine = D-alanine. The protein operates within amino-acid biosynthesis; D-alanine biosynthesis; D-alanine from L-alanine: step 1/1. Its function is as follows. Catalyzes the interconversion of L-alanine and D-alanine. May also act on other amino acids. This Deinococcus geothermalis (strain DSM 11300 / CIP 105573 / AG-3a) protein is Alanine racemase (alr).